Consider the following 377-residue polypeptide: Alanine racemase (377 aa).

Lys-37 serves as the catalytic Proton acceptor; specific for D-alanine. Lys-37 is subject to N6-(pyridoxal phosphate)lysine. Arg-135 lines the substrate pocket. Tyr-271 functions as the Proton acceptor; specific for L-alanine in the catalytic mechanism. Residue Met-319 participates in substrate binding.

It belongs to the alanine racemase family. The cofactor is pyridoxal 5'-phosphate.

It catalyses the reaction L-alanine = D-alanine. The protein operates within amino-acid biosynthesis; D-alanine biosynthesis; D-alanine from L-alanine: step 1/1. In terms of biological role, catalyzes the interconversion of L-alanine and D-alanine. May also act on other amino acids. The chain is Alanine racemase (alr) from Helicobacter pylori (strain HPAG1).